We begin with the raw amino-acid sequence, 34 residues long: Photosystem II reaction center protein T (34 aa).

Residues 3 to 23 form a helical membrane-spanning segment; sequence ALVYTFLLVSTLGIIFFAIFF.

Belongs to the PsbT family. PSII is composed of 1 copy each of membrane proteins PsbA, PsbB, PsbC, PsbD, PsbE, PsbF, PsbH, PsbI, PsbJ, PsbK, PsbL, PsbM, PsbT, PsbY, PsbZ, Psb30/Ycf12, at least 3 peripheral proteins of the oxygen-evolving complex and a large number of cofactors. It forms dimeric complexes.

It localises to the plastid. Its subcellular location is the chloroplast thylakoid membrane. Functionally, found at the monomer-monomer interface of the photosystem II (PS II) dimer, plays a role in assembly and dimerization of PSII. PSII is a light-driven water plastoquinone oxidoreductase, using light energy to abstract electrons from H(2)O, generating a proton gradient subsequently used for ATP formation. The protein is Photosystem II reaction center protein T of Solanum bulbocastanum (Wild potato).